Reading from the N-terminus, the 255-residue chain is Zinc import ATP-binding protein ZnuC (255 aa).

Residues valine 5–arginine 220 form the ABC transporter domain.

It belongs to the ABC transporter superfamily. Zinc importer (TC 3.A.1.15.5) family. As to quaternary structure, the complex is composed of two ATP-binding proteins (ZnuC), two transmembrane proteins (ZnuB) and a solute-binding protein (ZnuA).

Its subcellular location is the cell inner membrane. It catalyses the reaction Zn(2+)(out) + ATP(in) + H2O(in) = Zn(2+)(in) + ADP(in) + phosphate(in) + H(+)(in). Its function is as follows. Part of the ABC transporter complex ZnuABC involved in zinc import. Responsible for energy coupling to the transport system. The polypeptide is Zinc import ATP-binding protein ZnuC (Sodalis glossinidius (strain morsitans)).